We begin with the raw amino-acid sequence, 133 residues long: Rodlin protein RdlB (133 aa).

The N-terminal stretch at 1–28 (MIKKVVAYAAIAASVMGASAAAAPQAMA) is a signal peptide. Amyloid-forming stretches follow at residues 45–57 (QYFGNSMTTGNMS) and 59–70 (QMALIQGSFNKP). The required for amyloid formation stretch occupies residues 45–70 (QYFGNSMTTGNMSPQMALIQGSFNKP).

The protein belongs to the rodlin family.

It localises to the secreted. Its subcellular location is the cell wall. It is found in the spore wall. Its function is as follows. Forms part of the rodlet layer on the spore surface; despite their high similarity both RdlA and RdlB are required for rodlet formation. Plays a role in cell adhesion to polystyrene plates. Forms amyloid-like fibrils in vitro composed of stacked beta-sheets. The sequence is that of Rodlin protein RdlB from Streptomyces coelicolor (strain ATCC BAA-471 / A3(2) / M145).